The primary structure comprises 440 residues: Golgi-associated RAB2 interactor protein 2 (440 aa).

The protein belongs to the GARIN family. In terms of assembly, interacts with CALM1. Expressed in testis (at protein level).

Its subcellular location is the cell projection. It is found in the cilium. The protein localises to the flagellum. Functionally, seems to play a role in sperm motility. This chain is Golgi-associated RAB2 interactor protein 2, found in Mus musculus (Mouse).